A 209-amino-acid chain; its full sequence is Uracil phosphoribosyltransferase (209 aa).

Residues arginine 79, arginine 104, and 131–139 contribute to the 5-phospho-alpha-D-ribose 1-diphosphate site; that span reads DPMLATGGS. Uracil contacts are provided by residues isoleucine 194 and 199–201; that span reads GDA. Aspartate 200 provides a ligand contact to 5-phospho-alpha-D-ribose 1-diphosphate.

Belongs to the UPRTase family. It depends on Mg(2+) as a cofactor.

It carries out the reaction UMP + diphosphate = 5-phospho-alpha-D-ribose 1-diphosphate + uracil. It participates in pyrimidine metabolism; UMP biosynthesis via salvage pathway; UMP from uracil: step 1/1. Its activity is regulated as follows. Allosterically activated by GTP. In terms of biological role, catalyzes the conversion of uracil and 5-phospho-alpha-D-ribose 1-diphosphate (PRPP) to UMP and diphosphate. The polypeptide is Uracil phosphoribosyltransferase (Francisella tularensis subsp. novicida (strain U112)).